Consider the following 198-residue polypeptide: Ribonuclease HII (198 aa).

In terms of domain architecture, RNase H type-2 spans 9–198; it reads ITVAGADEAG…LLPDQLKIDF (190 aa). Asp15, Glu16, and Asp107 together coordinate a divalent metal cation.

It belongs to the RNase HII family. Mn(2+) is required as a cofactor. Requires Mg(2+) as cofactor.

The protein resides in the cytoplasm. It carries out the reaction Endonucleolytic cleavage to 5'-phosphomonoester.. Endonuclease that specifically degrades the RNA of RNA-DNA hybrids. This chain is Ribonuclease HII, found in Christiangramia forsetii (strain DSM 17595 / CGMCC 1.15422 / KT0803) (Gramella forsetii).